The following is a 584-amino-acid chain: UvrABC system protein C (584 aa).

The 78-residue stretch at 14–91 (HKPGCYLWKD…IKTHLPKYNI (78 aa)) folds into the GIY-YIG domain. The UVR domain occupies 192-227 (DHILMILQTKEQHAVTKLDFENAQKYAEQQKALTSI).

The protein belongs to the UvrC family. Interacts with UvrB in an incision complex.

Its subcellular location is the cytoplasm. The UvrABC repair system catalyzes the recognition and processing of DNA lesions. UvrC both incises the 5' and 3' sides of the lesion. The N-terminal half is responsible for the 3' incision and the C-terminal half is responsible for the 5' incision. This chain is UvrABC system protein C, found in Ureaplasma parvum serovar 3 (strain ATCC 27815 / 27 / NCTC 11736).